Consider the following 272-residue polypeptide: HMP-PP phosphatase (272 aa).

Asp-8 acts as the Nucleophile in catalysis. Asp-8, Asp-10, and Asp-212 together coordinate Mg(2+).

This sequence belongs to the HAD-like hydrolase superfamily. Cof family. Mg(2+) is required as a cofactor.

It carries out the reaction 4-amino-2-methyl-5-(diphosphooxymethyl)pyrimidine + H2O = 4-amino-2-methyl-5-(phosphooxymethyl)pyrimidine + phosphate + H(+). Catalyzes the hydrolysis of 4-amino-2-methyl-5-hydroxymethylpyrimidine pyrophosphate (HMP-PP) to 4-amino-2-methyl-5-hydroxymethylpyrimidine phosphate (HMP-P). This Escherichia coli (strain K12 / MC4100 / BW2952) protein is HMP-PP phosphatase.